A 312-amino-acid chain; its full sequence is Bifunctional pinoresinol-lariciresinol reductase (312 aa).

NADP(+) contacts are provided by residues 10 to 16, R35, and K44; that span reads GGTGYLG. K139 functions as the Proton acceptor in the catalytic mechanism. R143 contacts NADP(+). H271 serves as a coordination point for substrate.

It belongs to the NmrA-type oxidoreductase family. Isoflavone reductase subfamily. In terms of assembly, dimer. Expressed in young stems, young roots and petioles. In stems, expressed in radial parenchyma cells and in the cambial cells of developing secondary xylem.

It catalyses the reaction (+)-lariciresinol + NADP(+) = (+)-pinoresinol + NADPH + H(+). The enzyme catalyses (-)-secoisolariciresinol + NADP(+) = (+)-lariciresinol + NADPH + H(+). Its function is as follows. Reductase involved in lignan biosynthesis. Catalyzes the enantioselective sequential conversion of (+)-pinoresinol into (+)-lariciresinol and of (+)-lariciresinol into (-)-secoisolariciresinol. Abstracts the 4R-hydride from the NADPH cofactor during catalysis. This chain is Bifunctional pinoresinol-lariciresinol reductase (PLR_Fi1), found in Forsythia intermedia (Border forsythia).